Consider the following 199-residue polypeptide: Peroxiredoxin-1 (199 aa).

Ser2 is modified (N-acetylserine). The Thioredoxin domain maps to Ala6–Phe165. An N6-acetyllysine; alternate modification is found at Lys7. Lys7 participates in a covalent cross-link: Glycyl lysine isopeptide (Lys-Gly) (interchain with G-Cter in SUMO2); alternate. Residues Lys16 and Lys27 each carry the N6-acetyllysine modification. Ser32 carries the post-translational modification Phosphoserine. The residue at position 35 (Lys35) is an N6-acetyllysine; alternate. At Lys35 the chain carries N6-succinyllysine; alternate. Residue Cys52 is the Cysteine sulfenic acid (-SOH) intermediate of the active site. A Phosphothreonine; by CDK1 modification is found at Thr90. Lys120 participates in a covalent cross-link: Glycyl lysine isopeptide (Lys-Gly) (interchain with G-Cter in SUMO2). At Lys136 the chain carries N6-acetyllysine. The segment at Gly176–Lys199 is disordered. Residues Ile184–Lys199 show a composition bias toward basic and acidic residues. Lys185 participates in a covalent cross-link: Glycyl lysine isopeptide (Lys-Gly) (interchain with G-Cter in SUMO1). Lys197 bears the N6-acetyllysine mark.

This sequence belongs to the peroxiredoxin family. AhpC/Prx1 subfamily. Homodimer; disulfide-linked, upon oxidation. 5 homodimers assemble to form a ring-like decamer. Interacts with GDPD5; forms a mixed-disulfide with GDPD5. Interacts with SESN1 and SESN2. Interacts with FAM107A. Post-translationally, phosphorylated on Thr-90 during the M-phase, which leads to a more than 80% decrease in enzymatic activity. In terms of processing, acetylation increases reducing activity and resistance to superoxidation. Deacetylated by HDAC6 which decreases reducing activity. The enzyme can be inactivated by further oxidation of the cysteine sulfenic acid (C(P)-SOH) to sulphinic acid (C(P)-SO2H) instead of its condensation to a disulfide bond. It can be reactivated by forming a transient disulfide bond with sulfiredoxin SRXN1, which reduces the cysteine sulfinic acid in an ATP- and Mg-dependent manner.

It is found in the cytoplasm. Its subcellular location is the melanosome. It catalyses the reaction a hydroperoxide + [thioredoxin]-dithiol = an alcohol + [thioredoxin]-disulfide + H2O. Its function is as follows. Thiol-specific peroxidase that catalyzes the reduction of hydrogen peroxide and organic hydroperoxides to water and alcohols, respectively. Plays a role in cell protection against oxidative stress by detoxifying peroxides and as sensor of hydrogen peroxide-mediated signaling events. Might participate in the signaling cascades of growth factors and tumor necrosis factor-alpha by regulating the intracellular concentrations of H(2)O(2). Reduces an intramolecular disulfide bond in GDPD5 that gates the ability to GDPD5 to drive postmitotic motor neuron differentiation. This chain is Peroxiredoxin-1 (PRDX1), found in Homo sapiens (Human).